We begin with the raw amino-acid sequence, 346 residues long: N-acetyl-gamma-glutamyl-phosphate reductase (346 aa).

Cys-150 is an active-site residue.

It belongs to the NAGSA dehydrogenase family. Type 1 subfamily.

The protein localises to the cytoplasm. It carries out the reaction N-acetyl-L-glutamate 5-semialdehyde + phosphate + NADP(+) = N-acetyl-L-glutamyl 5-phosphate + NADPH + H(+). Its pathway is amino-acid biosynthesis; L-arginine biosynthesis; N(2)-acetyl-L-ornithine from L-glutamate: step 3/4. In terms of biological role, catalyzes the NADPH-dependent reduction of N-acetyl-5-glutamyl phosphate to yield N-acetyl-L-glutamate 5-semialdehyde. This Lachnoclostridium phytofermentans (strain ATCC 700394 / DSM 18823 / ISDg) (Clostridium phytofermentans) protein is N-acetyl-gamma-glutamyl-phosphate reductase.